The chain runs to 62 residues: Chymotrypsin inhibitor SCI-I (62 aa).

The BPTI/Kunitz inhibitor domain occupies 9–60; the sequence is CEQAFGNSGPCFAYIKLYSYNQKTKKCEEFIYGGCQGNDNRFITLAECEQKC. Disulfide bonds link C9–C60, C19–C43, and C35–C56.

Its function is as follows. Inhibits chymotrypsin and thus avoids the accidental chymotrypsin-mediated activation of prophenoloxidase. This enzyme is required by the insect immune system to produce melanin which is used to engulf foreign objects. This chain is Chymotrypsin inhibitor SCI-I, found in Bombyx mori (Silk moth).